A 148-amino-acid polypeptide reads, in one-letter code: 6,7-dimethyl-8-ribityllumazine synthase (148 aa).

Residues Phe-13, 44–46 (ALE), and 73–75 (MVI) each bind 5-amino-6-(D-ribitylamino)uracil. 78-79 (ET) is a binding site for (2S)-2-hydroxy-3-oxobutyl phosphate. His-81 acts as the Proton donor in catalysis. Asn-106 is a 5-amino-6-(D-ribitylamino)uracil binding site. Residue Arg-120 coordinates (2S)-2-hydroxy-3-oxobutyl phosphate.

It belongs to the DMRL synthase family.

It carries out the reaction (2S)-2-hydroxy-3-oxobutyl phosphate + 5-amino-6-(D-ribitylamino)uracil = 6,7-dimethyl-8-(1-D-ribityl)lumazine + phosphate + 2 H2O + H(+). It participates in cofactor biosynthesis; riboflavin biosynthesis; riboflavin from 2-hydroxy-3-oxobutyl phosphate and 5-amino-6-(D-ribitylamino)uracil: step 1/2. In terms of biological role, catalyzes the formation of 6,7-dimethyl-8-ribityllumazine by condensation of 5-amino-6-(D-ribitylamino)uracil with 3,4-dihydroxy-2-butanone 4-phosphate. This is the penultimate step in the biosynthesis of riboflavin. The protein is 6,7-dimethyl-8-ribityllumazine synthase of Agrobacterium fabrum (strain C58 / ATCC 33970) (Agrobacterium tumefaciens (strain C58)).